Reading from the N-terminus, the 185-residue chain is Photosystem I assembly protein Ycf4 (185 aa).

Transmembrane regions (helical) follow at residues 20 to 40 and 57 to 77; these read GNFFWACILFLGSLGFLSVGA and ILFFPQGVVMSFYGIAGLFIS.

The protein belongs to the Ycf4 family.

The protein localises to the plastid. The protein resides in the chloroplast thylakoid membrane. Functionally, seems to be required for the assembly of the photosystem I complex. This Lolium perenne (Perennial ryegrass) protein is Photosystem I assembly protein Ycf4.